The sequence spans 538 residues: Phosphoenolpyruvate carboxykinase (ATP) (538 aa).

Substrate contacts are provided by R61, Y195, and K201. Residues K201, H220, and 236–244 (GLSGTGKTT) contribute to the ATP site. The Mn(2+) site is built by K201 and H220. Residue D257 participates in Mn(2+) binding. The ATP site is built by E285, R323, and T449. R323 serves as a coordination point for substrate.

This sequence belongs to the phosphoenolpyruvate carboxykinase (ATP) family. Mn(2+) serves as cofactor.

It localises to the cytoplasm. The catalysed reaction is oxaloacetate + ATP = phosphoenolpyruvate + ADP + CO2. The protein operates within carbohydrate biosynthesis; gluconeogenesis. Functionally, involved in the gluconeogenesis. Catalyzes the conversion of oxaloacetate (OAA) to phosphoenolpyruvate (PEP) through direct phosphoryl transfer between the nucleoside triphosphate and OAA. This chain is Phosphoenolpyruvate carboxykinase (ATP), found in Nitrobacter hamburgensis (strain DSM 10229 / NCIMB 13809 / X14).